Reading from the N-terminus, the 92-residue chain is U21-hexatoxin-Hi1a (92 aa).

The first 19 residues, 1–19 (MKTILSMLIFVALFAAIVG), serve as a signal peptide directing secretion. Disulfide bonds link Cys-41/Cys-55, Cys-48/Cys-67, Cys-54/Cys-82, and Cys-85/Cys-92.

It belongs to the neurotoxin 21 family. In terms of tissue distribution, expressed by the venom gland.

It is found in the secreted. Potent insecticidal toxin with probable ion channel impairing activity. In vivo, reversibly paralyzes all flies within 30 minutes, even at low dose (0.3 nmol/g). The chain is U21-hexatoxin-Hi1a from Hadronyche infensa (Fraser island funnel-web spider).